A 548-amino-acid chain; its full sequence is Glucan 1,4-alpha-maltotetraohydrolase (548 aa).

The N-terminal stretch at 1–21 (MSHILRAAVLAAMLLPLPSMA) is a signal peptide. Aspartate 22, glutamine 23, histidine 34, aspartate 37, and glutamate 38 together coordinate Ca(2+). Residue 99 to 100 (YF) coordinates substrate. Asparagine 137 serves as a coordination point for Ca(2+). Residue histidine 138 participates in substrate binding. A disulfide bridge links cysteine 161 with cysteine 171. Ca(2+) is bound by residues aspartate 172 and aspartate 175. A substrate-binding site is contributed by 177–181 (FIGGD). A Ca(2+)-binding site is contributed by aspartate 183. Residue arginine 212 participates in substrate binding. The active-site Nucleophile is the aspartate 214. 217 to 218 (RG) is a binding site for substrate. Glycine 218 contributes to the Ca(2+) binding site. The cysteines at positions 237 and 272 are disulfide-linked. The Proton donor role is filled by glutamate 240. Substrate is bound by residues histidine 314 and glutamine 326. A CBM20 domain is found at 446–548 (GEPGALVSVS…SEGATTVGRL (103 aa)). A compositionally biased stretch (polar residues) spans 529-542 (QGGANNSLTPSEGA). The interval 529–548 (QGGANNSLTPSEGATTVGRL) is disordered.

Belongs to the glycosyl hydrolase 13 family. Monomer. Requires Ca(2+) as cofactor.

The protein resides in the secreted. The catalysed reaction is Hydrolysis of (1-&gt;4)-alpha-D-glucosidic linkages in amylaceous polysaccharides, to remove successive maltotetraose residues from the non-reducing chain ends.. It functions in the pathway glycan degradation; starch degradation. In Stutzerimonas stutzeri (Pseudomonas stutzeri), this protein is Glucan 1,4-alpha-maltotetraohydrolase (amyP).